The following is a 22-amino-acid chain: Short-chain-enoyl-CoA hydratase (22 aa).

The protein belongs to the enoyl-CoA hydratase/isomerase family.

The enzyme catalyses a short-chain (3S)-3-hydroxyacyl-CoA = a short-chain (2E)-enoyl-CoA + H2O. Its pathway is lipid metabolism; butanoate metabolism. This is Short-chain-enoyl-CoA hydratase (crt) from Clostridium pasteurianum.